Here is a 94-residue protein sequence, read N- to C-terminus: ESAT-6-like protein EsxI (94 aa).

The protein belongs to the WXG100 family. ESAT-6 subfamily.

Its subcellular location is the secreted. The protein is ESAT-6-like protein EsxI of Mycobacterium bovis (strain ATCC BAA-935 / AF2122/97).